Here is a 908-residue protein sequence, read N- to C-terminus: Mechanosensitive ion channel protein 8 (908 aa).

Residues 1–25 are compositionally biased toward polar residues; the sequence is MDFRNSFKSHSSYKQIRSPGDQSEP. Disordered regions lie at residues 1–88, 148–172, 190–221, and 242–265; these read MDFR…HTAV, DQEN…SFDA, VAGS…LQEE, and VKTR…WRSG. Residues 31–70 are compositionally biased toward basic and acidic residues; it reads PILHDHHPDHSGMVVDDQKPDSTRSSLDDGRNAPVERDAS. Polar residues-rich tracts occupy residues 75 to 85 and 156 to 171; these read QDNTTGTSTDH and HQTM…TSFD. Residues 196-206 show a composition bias toward low complexity; it reads SSSSHSSSSSS. A compositionally biased stretch (polar residues) spans 207–218; it reads ATMRTNQDQPQL. Over residues 247-256 the composition is skewed to basic and acidic residues; the sequence is RLQDPPREEE. Helical transmembrane passes span 298-318, 341-361, 381-401, 411-431, 673-693, and 709-729; these read AITL…ACSL, LVLI…VFFI, AVQN…LFDK, FLPY…LWLI, MINI…LEIA, and AFIF…LFIV.

This sequence belongs to the MscS (TC 1.A.23) family. As to expression, expressed in tricellular and mature pollen, and in germinating tube. Not detected in leaves or roots.

The protein localises to the cell membrane. The protein resides in the endomembrane system. Its activity is regulated as follows. Not regulated by MgCl(2), ruthenium red or tetramethylammonium-Cl. Functionally, mechanosensitive channel that opens in response to stretch forces in the membrane lipid bilayer. Exhibits a 6.3-fold preference for chloride over sodium. Regulates osmotic forces during pollen hydration and germination. The polypeptide is Mechanosensitive ion channel protein 8 (Arabidopsis thaliana (Mouse-ear cress)).